The primary structure comprises 1381 residues: Serine-aspartate repeat-containing protein D (1381 aa).

A signal peptide spans 1 to 35; it reads MLNRENKTAITRKGMVSNRLNKFSIRKYTVGTASI. Residues 23–34 carry the YSIRK-G/S signaling motif motif; it reads FSIRKYTVGTAS. The segment at 36 to 568 is ligand binding A region; it reads LVGTTLIFGL…NNQSGGAGQE (533 aa). Residues 54–185 form a disordered region; the sequence is ESTNKELNEA…NKKVDAKTES (132 aa). Composition is skewed to polar residues over residues 62–71 and 94–108; these read EATTSASDNQ and EMVS…SNGN. Positions 130–145 are enriched in basic and acidic residues; sequence KSDEQASPKSTNEDLN. Polar residues-rich tracts occupy residues 146–155 and 163–173; these read TKQTISNQEA and NKSVVNVQPTN. Residues 174-183 are compositionally biased toward basic and acidic residues; that stretch reads EENKKVDAKT. 5 consecutive CNA-B domains span residues 569–680, 681–791, 792–901, 902–1012, and 1013–1123; these read VYKI…IYKP, KYNL…YKTP, KYNL…FYKP, TYNL…YKTP, and KYSL…EEET. 3 disordered regions span residues 857–883, 972–992, and 1078–1357; these read ETPS…TSTT, YTPT…GLTT, and EKPA…SNNA. 2 stretches are compositionally biased toward polar residues: residues 860-869 and 972-981; these read SGYTPTQVGS and YTPTSVTSGN. Composition is skewed to acidic residues over residues 1091-1101, 1118-1134, 1142-1164, and 1172-1320; these read TEDDKDADGGE, YYEE…DSDS, and SDSD…DSDS. The short motif at 1344-1348 is the LPXTG sorting signal element; it reads LPETG. Thr-1347 carries the pentaglycyl murein peptidoglycan amidated threonine modification. Residues 1348–1381 constitute a propeptide, removed by sortase; that stretch reads GNENSGSNNATLFGGLFAALGSLLLFGRRKKQNK.

It belongs to the serine-aspartate repeat-containing protein (SDr) family. Interacts with host DSG1; this interaction increases S.aureus adherence to keratinocytes.

It is found in the secreted. The protein localises to the cell wall. Cell surface-associated calcium-binding protein which plays an important role in adhesion and pathogenesis. Mediates interactions with components of the extracellular matrix such as host DSG1 to promote bacterial adhesion to host cells. Contributes to the resistance to killing by innate immune components such as neutrophils present in blood and thus attenuates bacterial clearance. This Staphylococcus aureus (strain USA300) protein is Serine-aspartate repeat-containing protein D (sdrD).